The chain runs to 149 residues: FAD synthase (149 aa).

Residues 10-11 (TF), 15-18 (HPGH), D95, and Y123 contribute to the ATP site.

This sequence belongs to the archaeal FAD synthase family. Homodimer. Co(2+) is required as a cofactor.

The catalysed reaction is FMN + ATP + H(+) = FAD + diphosphate. Its pathway is cofactor biosynthesis; FAD biosynthesis; FAD from FMN: step 1/1. Its activity is regulated as follows. Is inhibited by the product PPi. Catalyzes the transfer of the AMP portion of ATP to flavin mononucleotide (FMN) to produce flavin adenine dinucleotide (FAD) coenzyme. To a lesser extent, is also able to utilize other nucleotides such as CTP and GTP as substrates, producing the modified coenzymes, flavin cytosine dinucleotide (FCD) and flavin guanine dinucleotide (FGD), respectively. Does not catalyze the reverse reaction to produce FMN and ATP from FAD and PPi. Does not function as a glycerol-3-phosphate cytidylyltransferase, as previously annotated in the complete genome. In Methanocaldococcus jannaschii (strain ATCC 43067 / DSM 2661 / JAL-1 / JCM 10045 / NBRC 100440) (Methanococcus jannaschii), this protein is FAD synthase (ribL).